The sequence spans 405 residues: MENIMTLPKIKHVRAWFIGGATAEKGAGGGDYHDQGGNHWIDDHIATPMSKYRDYEQSRQSFGINVLGTLIVEVEAENRQTGFAVSTAGEMGCFIVEKHLNRFIEGKCVSDIKLIHDQMLGATMYYSGSGGLVMNTISCVDLALWDLFGKVVGLPVYKLLGGAVRDEIQFYATGARPDLAKEMGFIGGKMPTHWGPHDGDAGIRKDAAMVADMREKCGPDFWLMLDCWMSQDVNYATKLAHACAPFNLKWIEECLPPQQYEGYRELKRNAPAGMMVTSGEHHGTLQSFRTLAETGIDIMQPDVGWCGGLTTLVEIAALAKSRGQLVVPHGSSVYSHHAVITFTNTPFSEFLMTSPDCSTLRPQFDPILLDEPVPVNGRIHKSVLDKPGFGVELNRDCHLKRPYSH.

Residues His-33 and Arg-59 each contribute to the substrate site. 3 residues coordinate Mg(2+): Asp-226, Glu-252, and Glu-280. The active-site Proton acceptor is His-329. A substrate-binding site is contributed by Glu-349.

The protein belongs to the mandelate racemase/muconate lactonizing enzyme family. RhamD subfamily. As to quaternary structure, homooctamer; tetramer of dimers. The cofactor is Mg(2+).

The catalysed reaction is L-rhamnonate = 2-dehydro-3-deoxy-L-rhamnonate + H2O. Its function is as follows. Catalyzes the dehydration of L-rhamnonate to 2-keto-3-deoxy-L-rhamnonate (KDR). Can also dehydrate L-lyxonate and L-mannonate, although less efficiently, but not 2-keto-4-hydroxyheptane-1,7-dioate. This chain is L-rhamnonate dehydratase (rhmD), found in Salmonella typhimurium (strain LT2 / SGSC1412 / ATCC 700720).